We begin with the raw amino-acid sequence, 149 residues long: D-aminoacyl-tRNA deacylase (149 aa).

The Gly-cisPro motif, important for rejection of L-amino acids signature appears at G137–P138.

It belongs to the DTD family. As to quaternary structure, homodimer.

Its subcellular location is the cytoplasm. It catalyses the reaction glycyl-tRNA(Ala) + H2O = tRNA(Ala) + glycine + H(+). The enzyme catalyses a D-aminoacyl-tRNA + H2O = a tRNA + a D-alpha-amino acid + H(+). Its function is as follows. An aminoacyl-tRNA editing enzyme that deacylates mischarged D-aminoacyl-tRNAs. Also deacylates mischarged glycyl-tRNA(Ala), protecting cells against glycine mischarging by AlaRS. Acts via tRNA-based rather than protein-based catalysis; rejects L-amino acids rather than detecting D-amino acids in the active site. By recycling D-aminoacyl-tRNA to D-amino acids and free tRNA molecules, this enzyme counteracts the toxicity associated with the formation of D-aminoacyl-tRNA entities in vivo and helps enforce protein L-homochirality. The polypeptide is D-aminoacyl-tRNA deacylase (Fervidobacterium nodosum (strain ATCC 35602 / DSM 5306 / Rt17-B1)).